Reading from the N-terminus, the 153-residue chain is Insulin-like growth factor 1 (153 aa).

The interval 49–77 (GPETLCGAELVDALQFVCGDRGFYFNKPT) is b. 3 disulfide bridges follow: cysteine 54–cysteine 96, cysteine 66–cysteine 109, and cysteine 95–cysteine 100. A c region spans residues 78–89 (GYGSSSRRAPQT). The a stretch occupies residues 90 to 110 (GIVDECCFRSCDLRRLEMYCA). The segment at 111-118 (PLKPAKSA) is d. Positions 119 to 153 (RSVRAQRHTDMPKAQKEVHLKNASRGSAGNKNYRM) are cleaved as a propeptide — e peptide. Residues 120–153 (SVRAQRHTDMPKAQKEVHLKNASRGSAGNKNYRM) form a disordered region. Residues 125 to 138 (RHTDMPKAQKEVHL) are compositionally biased toward basic and acidic residues. A compositionally biased stretch (polar residues) spans 142 to 153 (SRGSAGNKNYRM).

The protein belongs to the insulin family. As to quaternary structure, forms a ternary complex with IGFR1 and ITGAV:ITGB3. Forms a ternary complex with IGFR1 and ITGA6:ITGB4. Forms a ternary complex with IGFBP3 and ALS.

The protein localises to the secreted. In terms of biological role, the insulin-like growth factors, isolated from plasma, are structurally and functionally related to insulin but have a much higher growth-promoting activity. May be a physiological regulator of [1-14C]-2-deoxy-D-glucose (2DG) transport and glycogen synthesis in osteoblasts. Stimulates glucose transport in bone-derived osteoblastic (PyMS) cells and is effective at much lower concentrations than insulin, not only regarding glycogen and DNA synthesis but also with regard to enhancing glucose uptake. May play a role in synapse maturation. Ca(2+)-dependent exocytosis of IGF1 is required for sensory perception of smell in the olfactory bulb. Acts as a ligand for IGF1R. Binds to the alpha subunit of IGF1R, leading to the activation of the intrinsic tyrosine kinase activity which autophosphorylates tyrosine residues in the beta subunit thus initiating a cascade of down-stream signaling events leading to activation of the PI3K-AKT/PKB and the Ras-MAPK pathways. Binds to integrins ITGAV:ITGB3 and ITGA6:ITGB4. Its binding to integrins and subsequent ternary complex formation with integrins and IGFR1 are essential for IGF1 signaling. Induces the phosphorylation and activation of IGFR1, MAPK3/ERK1, MAPK1/ERK2 and AKT1. As part of the MAPK/ERK signaling pathway, acts as a negative regulator of apoptosis in cardiomyocytes via promotion of STUB1/CHIP-mediated ubiquitination and degradation of ICER-type isoforms of CREM. The polypeptide is Insulin-like growth factor 1 (Canis lupus familiaris (Dog)).